The chain runs to 196 residues: Probable thymidylate kinase (196 aa).

9 to 16 (GIDGSGKT) serves as a coordination point for ATP.

The protein belongs to the thymidylate kinase family.

It carries out the reaction dTMP + ATP = dTDP + ADP. This Methanococcus aeolicus (strain ATCC BAA-1280 / DSM 17508 / OCM 812 / Nankai-3) protein is Probable thymidylate kinase.